Consider the following 92-residue polypeptide: MSESGGMVKSVHVIPLKRVYFGRRMNRADRAIRLVRKYVARHFKDAEKIILDPELNKYIWSCGREKPPRRVVVEIRFNKNEKEARVFLKRVK.

The protein belongs to the eukaryotic ribosomal protein eL31 family.

This chain is Large ribosomal subunit protein eL31, found in Desulfurococcus amylolyticus (strain DSM 18924 / JCM 16383 / VKM B-2413 / 1221n) (Desulfurococcus kamchatkensis).